We begin with the raw amino-acid sequence, 298 residues long: Protein pxr1 (298 aa).

The span at Met1–Lys11 shows a compositional bias: basic residues. Residues Met1 to Arg23 are disordered. One can recognise a G-patch domain in the interval Thr25–Gly79. Positions Leu145–Gly274 are disordered. The segment covering Val151–Asn164 has biased composition (polar residues). A compositionally biased stretch (basic residues) spans Arg199–Lys222. The span at Gly247–Ser256 shows a compositional bias: polar residues.

Belongs to the PINX1 family.

It is found in the nucleus. The protein resides in the nucleolus. In terms of biological role, involved in rRNA-processing at A0, A1 and A2 sites and negatively regulates telomerase. In Aspergillus terreus (strain NIH 2624 / FGSC A1156), this protein is Protein pxr1 (pxr1).